Reading from the N-terminus, the 363-residue chain is 3-isopropylmalate dehydrogenase (363 aa).

78 to 91 provides a ligand contact to NAD(+); the sequence is GPKWEHLPPDQQPE. Positions 99, 109, 138, and 227 each coordinate substrate. Residues aspartate 227, aspartate 251, and aspartate 255 each coordinate Mg(2+). 285-297 provides a ligand contact to NAD(+); sequence GSAPDIAGKNIAN.

It belongs to the isocitrate and isopropylmalate dehydrogenases family. LeuB type 1 subfamily. As to quaternary structure, homodimer. Requires Mg(2+) as cofactor. Mn(2+) serves as cofactor.

Its subcellular location is the cytoplasm. It catalyses the reaction (2R,3S)-3-isopropylmalate + NAD(+) = 4-methyl-2-oxopentanoate + CO2 + NADH. Its pathway is amino-acid biosynthesis; L-leucine biosynthesis; L-leucine from 3-methyl-2-oxobutanoate: step 3/4. With respect to regulation, requires K(+) ions for optimum activity. In terms of biological role, catalyzes the oxidation of 3-carboxy-2-hydroxy-4-methylpentanoate (3-isopropylmalate) to 3-carboxy-4-methyl-2-oxopentanoate. The product decarboxylates to 4-methyl-2 oxopentanoate. In Escherichia coli (strain K12), this protein is 3-isopropylmalate dehydrogenase.